Consider the following 356-residue polypeptide: MSQSGKNGLTYSDAGVDIDAGNLMVEKIKPHVRSTRRPGADGEIGGFGGLFDLKAAGFSDPVLVAANDGVGTKLKIAIDADKHDTVGIDLVAMCVNDLVVQGAEPLFFLDYFATGKLDPDQGAAIVAGIAAGCREAGCALIGGETAEMPGMYSGGDYDLAGFAVGAAERGQLLPAGDIAEGDVILGLASSGVHSNGYSLVRKIVSLSGLAWDAPAPFGEGTLADLLMTPTRIYVKPLLKAIRETGAIKALAHITGGGFPENIPRVLPKHLAAEIDLGAIKPPAVFSWLAKTGGVAANEMLRTFNCGVGMIAVVPASEAEKVAAVLAGEGETVFTLGRMVARAEGAPGTIYKGNLAI.

It belongs to the AIR synthase family.

The protein localises to the cytoplasm. The enzyme catalyses 2-formamido-N(1)-(5-O-phospho-beta-D-ribosyl)acetamidine + ATP = 5-amino-1-(5-phospho-beta-D-ribosyl)imidazole + ADP + phosphate + H(+). It functions in the pathway purine metabolism; IMP biosynthesis via de novo pathway; 5-amino-1-(5-phospho-D-ribosyl)imidazole from N(2)-formyl-N(1)-(5-phospho-D-ribosyl)glycinamide: step 2/2. This Rhizobium meliloti (strain 1021) (Ensifer meliloti) protein is Phosphoribosylformylglycinamidine cyclo-ligase.